A 112-amino-acid polypeptide reads, in one-letter code: Protein FAM32A (112 aa).

The tract at residues T23–D56 is disordered. Positions K45–D56 are enriched in basic and acidic residues.

The protein belongs to the FAM32 family.

It is found in the nucleus. Its function is as follows. May induce G2 arrest and apoptosis. May also increase cell sensitivity to apoptotic stimuli. The sequence is that of Protein FAM32A (Fam32a) from Rattus norvegicus (Rat).